An 818-amino-acid polypeptide reads, in one-letter code: G-type lectin S-receptor-like serine/threonine-protein kinase At1g67520 (818 aa).

Positions 1–22 (MCSNGIFVSLLTLSLLLGKSCS) are cleaved as a signal peptide. Residues 23–387 (ETDTLHQGQF…NENKKVAAWH (365 aa)) are Extracellular-facing. One can recognise a Bulb-type lectin domain in the interval 24–149 (TDTLHQGQFL…DADGSMKRVL (126 aa)). Asparagine 123, asparagine 199, and asparagine 337 each carry an N-linked (GlcNAc...) asparagine glycan. The 90-residue stretch at 290–379 (CLAAGYVVRD…PRTIYIRGNE (90 aa)) folds into the PAN domain. Intrachain disulfides connect cysteine 330–cysteine 353 and cysteine 334–cysteine 340. Residues 388 to 408 (IVVATLFLMTPIIWFIIYLVL) form a helical membrane-spanning segment. Topologically, residues 409-818 (RKFNVKGRNC…SITITVLEAR (410 aa)) are cytoplasmic. The Protein kinase domain occupies 496 to 785 (FSDENKLGEG…ALSLPKEPAF (290 aa)). ATP is bound by residues 502–510 (LGEGGFGPV) and lysine 524. Residue serine 530 is modified to Phosphoserine. Positions 585–602 (LRKNVLDWTLRFRIMEGI) are caM-binding. The Proton acceptor role is filled by aspartate 621. Residues serine 625 and serine 638 each carry the phosphoserine modification. At threonine 655 the chain carries Phosphothreonine. A phosphoserine mark is found at serine 699 and serine 807. Threonine 813 carries the post-translational modification Phosphothreonine.

This sequence belongs to the protein kinase superfamily. Ser/Thr protein kinase family.

Its subcellular location is the cell membrane. It catalyses the reaction L-seryl-[protein] + ATP = O-phospho-L-seryl-[protein] + ADP + H(+). The enzyme catalyses L-threonyl-[protein] + ATP = O-phospho-L-threonyl-[protein] + ADP + H(+). This chain is G-type lectin S-receptor-like serine/threonine-protein kinase At1g67520, found in Arabidopsis thaliana (Mouse-ear cress).